The sequence spans 770 residues: Pyrophosphate-energized vacuolar membrane proton pump 1 (770 aa).

Topologically, residues 1–9 (MVAPALLPE) are intravacuolar. A helical transmembrane segment spans residues 10–36 (LWTEILVPICAVIGIAFSLFQWYVVSR). At 37–88 (VKLTSDLGASSSGGANNGKNGYGDYLIEEEEGVNDQSVVAKCAEIQTAISEG) the chain is on the cytoplasmic side. The helical transmembrane segment at 89-118 (ATSFLFTEYKYVGVFMIFFAAVIFVFLGSV) threads the bilayer. Topologically, residues 119–139 (EGFSTDNKPCTYDTTRTCKPA) are intravacuolar. Cys-128 and Cys-136 form a disulfide bridge. Residues 140–167 (LATAAFSTIAFVLGAVTSVLSGFLGMKI) traverse the membrane as a helical segment. Residues 168–190 (ATYANARTTLEARKGVGKAFIVA) are Cytoplasmic-facing. Residues 191 to 220 (FRSGAVMGFLLAASGLLVLYITINVFKIYY) form a helical membrane-spanning segment. The Intravacuolar portion of the chain corresponds to 221–223 (GDD). Residues 224-252 (WEGLFEAITGYGLGGSSMALFGRVGGGIY) traverse the membrane as a helical segment. At 253-290 (TKAADVGADLVGKIERNIPEDDPRNPAVIADNVGDNVG) the chain is on the cytoplasmic side. Substrate is bound at residue Lys-254. Residues Asp-257, Asp-261, and Asp-287 each coordinate Mg(2+). A helical membrane pass occupies residues 291–316 (DIAGMGSDLFGSYAEASCAALVVASI). Over 317–324 (SSFGINHD) the chain is Intravacuolar. The chain crosses the membrane as a helical span at residues 325–350 (FTAMCYPLLISSMGILVCLITTLFAT). Residues 351–358 (DFFEIKLV) lie on the Cytoplasmic side of the membrane. The helical transmembrane segment at 359-386 (KEIEPALKNQLIISTVIMTVGIAIVSWV) threads the bilayer. Over 387 to 405 (GLPTSFTIFNFGTQKVVKN) the chain is Intravacuolar. The chain crosses the membrane as a helical span at residues 406–429 (WQLFLCVCVGLWAGLIIGFVTEYY). Residues 430-451 (TSNAYSPVQDVADSCRTGAATN) are Cytoplasmic-facing. A helical transmembrane segment spans residues 452–476 (VIFGLALGYKSVIIPIFAIAISIFV). The Intravacuolar segment spans residues 477 to 482 (SFSFAA). A helical transmembrane segment spans residues 483–509 (MYGVAVAALGMLSTIATGLAIDAYGPI). Residues 510-538 (SDNAGGIAEMAGMSHRIRERTDALDAAGN) lie on the Cytoplasmic side of the membrane. Mg(2+) is bound by residues Asp-511 and Asn-538. A helical membrane pass occupies residues 539–567 (TTAAIGKGFAIGSAALVSLALFGAFVSRA). At 568 to 577 (GIHTVDVLTP) the chain is on the intravacuolar side. A helical transmembrane segment spans residues 578–606 (KVIIGLLVGAMLPYWFSAMTMKSVGSAAL). Residues 607 to 635 (KMVEEVRRQFNTIPGLMEGTAKPDYATCV) are Cytoplasmic-facing. Residues 636 to 664 (KISTDASIKEMIPPGCLVMLTPLIVGFFF) form a helical membrane-spanning segment. Gly-665 is a topological domain (intravacuolar). Residues 666–693 (VETLSGVLAGSLVSGVQIAISASNTGGA) traverse the membrane as a helical segment. The Cytoplasmic segment spans residues 694–736 (WDNAKKYIEAGVSEHAKSLGPKGSEPHKAAVIGDTIGDPLKDT). Positions 695 and 731 each coordinate Mg(2+). Substrate is bound at residue Lys-734. The helical transmembrane segment at 737–762 (SGPSLNILIKLMAVESLVFAPFFATH) threads the bilayer. Residues 763–770 (GGILFKYF) lie on the Intravacuolar side of the membrane.

This sequence belongs to the H(+)-translocating pyrophosphatase (TC 3.A.10) family. K(+)-stimulated subfamily. As to quaternary structure, monomer. Ubiquitous (at protein level). Mostly expressed in vascular tissues, meristems and root pericycle.

The protein localises to the vacuole membrane. It localises to the endosome membrane. The protein resides in the cell membrane. It carries out the reaction diphosphate + H2O + H(+)(in) = 2 phosphate + 2 H(+)(out). Its activity is regulated as follows. Activated by K(+) and Mg(2+). Inhibited by Ca(2+), N,N'-dicyclohexylcarbodiimide (DCCD), N-ethylmaleimide (NEM) and aminomethylenediphosphonate (AMDP), and, to a lower extent, by fluoride (KF). Contributes to the transtonoplast (from cytosol to vacuole lumen) H(+)-electrochemical potential difference. It establishes a proton gradient of similar and often greater magnitude than the H(+)-ATPase on the same membrane. In addition, facilitates auxin transport by modulating apoplastic pH and regulates auxin-mediated developmental processes. Confers tolerance to NaCl and to drought by increasing ion retention. This is Pyrophosphate-energized vacuolar membrane proton pump 1 (AVP1) from Arabidopsis thaliana (Mouse-ear cress).